The chain runs to 239 residues: MTEDAEKRRYWLMKAEGEPRYVKGINVAFTFEMLEEITEDGKMESWSGVRNYEARNMIRDEIKIGDYAFLYCSNCKFPHIKGVMRICSNSHPDDSAWNSNDPYYDPKSTPQNPRWYSVGVQSEYKLDRPVTLRELKMHKENQLKSMELLNRSRLSISRVKPEEWKFIHELSKQPEPEEIIKARLQEEEKVAKRKRKLNLSDGENKAKSPYSSISENDASLDIIKRSRIKDVRSQKDNAL.

Residues 193 to 214 (RKRKLNLSDGENKAKSPYSSIS) are disordered.

The protein localises to the nucleus. This is an uncharacterized protein from Schizosaccharomyces pombe (strain 972 / ATCC 24843) (Fission yeast).